Consider the following 208-residue polypeptide: Guanylate kinase (208 aa).

Residues 4–181 enclose the Guanylate kinase-like domain; the sequence is GLLIVISGPS…AVEKIQSIIS (178 aa). 11 to 18 is a binding site for ATP; it reads GPSGTGKG.

The protein belongs to the guanylate kinase family.

It is found in the cytoplasm. It carries out the reaction GMP + ATP = GDP + ADP. Essential for recycling GMP and indirectly, cGMP. This is Guanylate kinase from Clostridium tetani (strain Massachusetts / E88).